A 160-amino-acid polypeptide reads, in one-letter code: NADH-quinone oxidoreductase subunit B (160 aa).

Residues Cys-37, Cys-38, Cys-102, and Cys-132 each coordinate [4Fe-4S] cluster.

Belongs to the complex I 20 kDa subunit family. As to quaternary structure, NDH-1 is composed of 14 different subunits. Subunits NuoB, C, D, E, F, and G constitute the peripheral sector of the complex. It depends on [4Fe-4S] cluster as a cofactor.

It localises to the cell membrane. It carries out the reaction a quinone + NADH + 5 H(+)(in) = a quinol + NAD(+) + 4 H(+)(out). In terms of biological role, NDH-1 shuttles electrons from NADH, via FMN and iron-sulfur (Fe-S) centers, to quinones in the respiratory chain. Couples the redox reaction to proton translocation (for every two electrons transferred, four hydrogen ions are translocated across the cytoplasmic membrane), and thus conserves the redox energy in a proton gradient. This Polynucleobacter asymbioticus (strain DSM 18221 / CIP 109841 / QLW-P1DMWA-1) (Polynucleobacter necessarius subsp. asymbioticus) protein is NADH-quinone oxidoreductase subunit B.